Reading from the N-terminus, the 154-residue chain is Ribosomal RNA large subunit methyltransferase H (154 aa).

Residues Gly-103 and Phe-122–Phe-127 each bind S-adenosyl-L-methionine.

It belongs to the RNA methyltransferase RlmH family. Homodimer.

Its subcellular location is the cytoplasm. It carries out the reaction pseudouridine(1915) in 23S rRNA + S-adenosyl-L-methionine = N(3)-methylpseudouridine(1915) in 23S rRNA + S-adenosyl-L-homocysteine + H(+). Its function is as follows. Specifically methylates the pseudouridine at position 1915 (m3Psi1915) in 23S rRNA. The polypeptide is Ribosomal RNA large subunit methyltransferase H (Caldicellulosiruptor saccharolyticus (strain ATCC 43494 / DSM 8903 / Tp8T 6331)).